The following is a 276-amino-acid chain: Omega-amidase NIT2 (276 aa).

Residues 4-248 enclose the CN hydrolase domain; that stretch reads FRLALIQLQV…ETILYSDIDL (245 aa). Residue Ser-26 is modified to Phosphoserine. The active-site Proton acceptor is Glu-43. Lys-68 carries the N6-acetyllysine; alternate modification. An N6-succinyllysine; alternate modification is found at Lys-68. Lys-112 (proton donor) is an active-site residue. Residues Lys-123 and Lys-130 each carry the N6-succinyllysine modification. The Nucleophile role is filled by Cys-153.

It belongs to the carbon-nitrogen hydrolase superfamily. NIT1/NIT2 family. As to quaternary structure, homodimer.

It localises to the cytoplasm. It carries out the reaction a monoamide of a dicarboxylate + H2O = a dicarboxylate + NH4(+). The enzyme catalyses 2-oxoglutaramate + H2O = 2-oxoglutarate + NH4(+). The catalysed reaction is 2-oxosuccinamate + H2O = oxaloacetate + NH4(+). In terms of biological role, has omega-amidase activity. The role of omega-amidase is to remove potentially toxic intermediates by converting 2-oxoglutaramate and 2-oxosuccinamate to biologically useful 2-oxoglutarate and oxaloacetate, respectively. Can also hydrolyze gamma-monomethyl-alpha-ketoglutarate in vitro. This Mus musculus (Mouse) protein is Omega-amidase NIT2.